The following is a 571-amino-acid chain: S100P-binding protein (571 aa).

Residues 270–280 (SDIPFDGDIDE) are compositionally biased toward acidic residues. Disordered stretches follow at residues 270 to 312 (SDIP…LESV) and 356 to 385 (NGQN…CSQS). A compositionally biased stretch (polar residues) spans 299–309 (TSESTPASSEL). The segment covering 365–378 (PLPPSDTAPGPQLP) has biased composition (pro residues).

The protein resides in the nucleus. This chain is S100P-binding protein (s100pbp), found in Xenopus tropicalis (Western clawed frog).